A 207-amino-acid chain; its full sequence is Outer-membrane lipoprotein carrier protein (207 aa).

An N-terminal signal peptide occupies residues 1 to 21 (MRLIRMLLATALTFSVIPAHA).

The protein belongs to the LolA family. In terms of assembly, monomer.

The protein resides in the periplasm. In terms of biological role, participates in the translocation of lipoproteins from the inner membrane to the outer membrane. Only forms a complex with a lipoprotein if the residue after the N-terminal Cys is not an aspartate (The Asp acts as a targeting signal to indicate that the lipoprotein should stay in the inner membrane). The polypeptide is Outer-membrane lipoprotein carrier protein (Pseudomonas syringae pv. tomato (strain ATCC BAA-871 / DC3000)).